Consider the following 141-residue polypeptide: Nucleoside diphosphate kinase (141 aa).

The ATP site is built by K11, F59, R87, T93, R104, and N114. H117 functions as the Pros-phosphohistidine intermediate in the catalytic mechanism.

Belongs to the NDK family. As to quaternary structure, homotetramer. Mg(2+) serves as cofactor.

It localises to the cytoplasm. It carries out the reaction a 2'-deoxyribonucleoside 5'-diphosphate + ATP = a 2'-deoxyribonucleoside 5'-triphosphate + ADP. The catalysed reaction is a ribonucleoside 5'-diphosphate + ATP = a ribonucleoside 5'-triphosphate + ADP. Functionally, major role in the synthesis of nucleoside triphosphates other than ATP. The ATP gamma phosphate is transferred to the NDP beta phosphate via a ping-pong mechanism, using a phosphorylated active-site intermediate. This is Nucleoside diphosphate kinase from Nitrosomonas europaea (strain ATCC 19718 / CIP 103999 / KCTC 2705 / NBRC 14298).